The chain runs to 352 residues: Glucose-6-phosphatase catalytic subunit 1 (352 aa).

Residues methionine 1–aspartate 27 are Lumenal-facing. The helical transmembrane segment at leucine 28–histidine 48 threads the bilayer. Over leucine 49–arginine 56 the chain is Cytoplasmic. A helical membrane pass occupies residues leucine 57 to glycine 77. Residues glutamate 78–serine 113 lie on the Lumenal side of the membrane. Substrate is bound at residue arginine 79. The chain crosses the membrane as a helical span at residues glycine 114–alanine 134. Histidine 115 functions as the Proton donor in the catalytic mechanism. Over arginine 135–proline 141 the chain is Cytoplasmic. Residues leucine 142 to valine 162 form a helical membrane-spanning segment. Residues cysteine 163–arginine 166 lie on the Lumenal side of the membrane. Arginine 166 serves as a coordination point for substrate. The chain crosses the membrane as a helical span at residues valine 167 to valine 187. The active-site Nucleophile is the histidine 172. At alanine 188–tyrosine 205 the chain is on the cytoplasmic side. Residues phenylalanine 206–leucine 226 traverse the membrane as a helical segment. Over aspartate 227–serine 256 the chain is Lumenal. A helical membrane pass occupies residues leucine 257–tyrosine 276. At lysine 277 to arginine 289 the chain is on the cytoplasmic side. Residues isoleucine 290–proline 310 form a helical membrane-spanning segment. The Lumenal segment spans residues glutamate 311–serine 324. Residues alanine 325–valine 345 form a helical membrane-spanning segment. Residues lysine 346 to leucine 352 are Cytoplasmic-facing. The short motif at glycine 349 to leucine 352 is the Prevents secretion from ER element.

It belongs to the glucose-6-phosphatase family.

It localises to the endoplasmic reticulum membrane. The catalysed reaction is D-glucose 6-phosphate + H2O = D-glucose + phosphate. It functions in the pathway carbohydrate biosynthesis; gluconeogenesis. Functionally, hydrolyzes glucose-6-phosphate to glucose in the endoplasmic reticulum. Forms with the glucose-6-phosphate transporter (SLC37A4/G6PT) the complex responsible for glucose production in the terminal step of glycogenolysis and gluconeogenesis. Hence, it is the key enzyme in homeostatic regulation of blood glucose levels. This Haplochromis nubilus (Blue Victoria mouthbrooder) protein is Glucose-6-phosphatase catalytic subunit 1 (g6pc1).